The sequence spans 356 residues: V-type proton ATPase subunit d (356 aa).

Belongs to the V-ATPase V0D/AC39 subunit family. V-ATPase is a heteromultimeric enzyme composed of a peripheral catalytic V1 complex (components A to H) attached to an integral membrane V0 proton pore complex (components: a, c, c', c'' and d).

Its function is as follows. Subunit of the integral membrane V0 complex of vacuolar ATPase. Vacuolar ATPase is responsible for acidifying a variety of intracellular compartments in eukaryotic cells, thus providing most of the energy required for transport processes in the vacuolar system. The protein is V-type proton ATPase subunit d (vatD-1) of Dictyostelium discoideum (Social amoeba).